The following is a 309-amino-acid chain: Methionyl-tRNA formyltransferase (309 aa).

(6S)-5,6,7,8-tetrahydrofolate is bound at residue Ser112–Pro115.

It belongs to the Fmt family.

It carries out the reaction L-methionyl-tRNA(fMet) + (6R)-10-formyltetrahydrofolate = N-formyl-L-methionyl-tRNA(fMet) + (6S)-5,6,7,8-tetrahydrofolate + H(+). In terms of biological role, attaches a formyl group to the free amino group of methionyl-tRNA(fMet). The formyl group appears to play a dual role in the initiator identity of N-formylmethionyl-tRNA by promoting its recognition by IF2 and preventing the misappropriation of this tRNA by the elongation apparatus. The chain is Methionyl-tRNA formyltransferase from Bartonella bacilliformis (strain ATCC 35685 / KC583 / Herrer 020/F12,63).